The chain runs to 241 residues: 1-(5-phosphoribosyl)-5-[(5-phosphoribosylamino)methylideneamino] imidazole-4-carboxamide isomerase (241 aa).

D8 (proton acceptor) is an active-site residue. D130 acts as the Proton donor in catalysis.

The protein belongs to the HisA/HisF family.

It localises to the cytoplasm. The enzyme catalyses 1-(5-phospho-beta-D-ribosyl)-5-[(5-phospho-beta-D-ribosylamino)methylideneamino]imidazole-4-carboxamide = 5-[(5-phospho-1-deoxy-D-ribulos-1-ylimino)methylamino]-1-(5-phospho-beta-D-ribosyl)imidazole-4-carboxamide. It functions in the pathway amino-acid biosynthesis; L-histidine biosynthesis; L-histidine from 5-phospho-alpha-D-ribose 1-diphosphate: step 4/9. This is 1-(5-phosphoribosyl)-5-[(5-phosphoribosylamino)methylideneamino] imidazole-4-carboxamide isomerase from Leptospira borgpetersenii serovar Hardjo-bovis (strain L550).